The primary structure comprises 222 residues: Uracil-DNA glycosylase (222 aa).

Catalysis depends on aspartate 66, which acts as the Proton acceptor.

This sequence belongs to the uracil-DNA glycosylase (UDG) superfamily. UNG family.

The protein localises to the cytoplasm. The enzyme catalyses Hydrolyzes single-stranded DNA or mismatched double-stranded DNA and polynucleotides, releasing free uracil.. Functionally, excises uracil residues from the DNA which can arise as a result of misincorporation of dUMP residues by DNA polymerase or due to deamination of cytosine. The chain is Uracil-DNA glycosylase from Porphyromonas gingivalis (strain ATCC 33277 / DSM 20709 / CIP 103683 / JCM 12257 / NCTC 11834 / 2561).